A 1135-amino-acid polypeptide reads, in one-letter code: Integrin alpha-7 (1135 aa).

The signal sequence occupies residues 1–33 (MARIPRCDFLGLPGICYLLSFLLAGLLLPRASA). The Extracellular portion of the chain corresponds to 34-1036 (FNLDVMGAIR…VAVVAEGVPW (1003 aa)). 7 FG-GAP repeats span residues 38-103 (VMGA…ETDC), 110-165 (RGAN…RCFV), 185-238 (EGRP…DPDQ), 248-305 (DRLT…ASRL), 306-367 (IPEV…HWAD), 368-423 (ISPL…GVVT), and 427-486 (QVLE…IDPR). Asn86 carries an N-linked (GlcNAc...) asparagine glycan. 3 disulfides stabilise this stretch: Cys94/Cys103, Cys140/Cys163, and Cys184/Cys197. The Ca(2+) site is built by Asp328, Asn330, Asp332, Asp336, Asp390, Asn392, Asp394, Asp398, Asp448, Asp450, Asn452, Tyr454, and Asp456. Disulfide bonds link Cys495–Cys502, Cys508–Cys571, Cys637–Cys643, Cys736–Cys747, Cys894–Cys948, and Cys955–Cys960. The N-linked (GlcNAc...) asparagine glycan is linked to Asn741. The span at 905–916 (VDSRDRRRRELG) shows a compositional bias: basic and acidic residues. Positions 905–933 (VDSRDRRRRELGQPEPQEPPEKVEPSTSW) are disordered. An N-linked (GlcNAc...) asparagine glycan is attached at Asn943. Residues Asn979 and Asn999 are each glycosylated (N-linked (GlcNAc...) asparagine). A helical membrane pass occupies residues 1037–1057 (WVILLAVLAGLLVLALLVLLL). Residues 1058–1135 (WKLGFFKRAK…PDGHPVSVTA (78 aa)) lie on the Cytoplasmic side of the membrane. The GFFKR motif signature appears at 1061 to 1065 (GFFKR). 3 consecutive repeat copies span residues 1111 to 1114 (DAHP), 1119 to 1122 (DWHP), and 1127 to 1130 (DGHP). The segment at 1111–1130 (DAHPILAADWHPELGPDGHP) is 3 X 4 AA repeats of D-X-H-P.

It belongs to the integrin alpha chain family. As to quaternary structure, interacts (via C-terminus intracellular tail region) with CIB1; the interaction is stabilized/increased in a calcium- and magnesium-dependent manner. Heterodimer of an alpha and a beta subunit. The alpha subunit is composed of a heavy and a light chain linked by a disulfide bond. Alpha-7 associates with beta-1. Interacts with COMP. ADP-ribosylated on at least two sites of the extracellular domain in skeletal myotubes. Post-translationally, a 70 kDa form is created by proteolytic cleavage. Cleavage is elevated during myogenic differentiation and the cleaved form enhances cell adhesion and spreading on laminin. As to expression, expressed in skeletal and cardiac muscle. Expressed in replicating myoblasts. In differentiated muscle fibers localizes between fibers and the surrounding matrix. Isoform Alpha-7X1A and isoform Alpha-7X1B are expressed at myotendinous and neuromuscular junctions; isoform Alpha-7X1C is expressed at neuromuscular junctions and at extrasynaptic sites.

The protein localises to the membrane. Integrin alpha-7/beta-1 is the primary laminin receptor on skeletal myoblasts and adult myofibers. During myogenic differentiation, it may induce changes in the shape and mobility of myoblasts, and facilitate their localization at laminin-rich sites of secondary fiber formation. Involved in the maintenance of the myofibers cytoarchitecture as well as for their anchorage, viability and functional integrity. Required to promote contractile phenotype acquisition in differentiated airway smooth muscle (ASM) cells. Acts as a Schwann cell receptor for laminin-2. Acts as a receptor of COMP and mediates its effect on vascular smooth muscle cells (VSMCs) maturation. This is Integrin alpha-7 (Itga7) from Rattus norvegicus (Rat).